The sequence spans 310 residues: Methionyl-tRNA formyltransferase (310 aa).

Position 109-112 (109-112) interacts with (6S)-5,6,7,8-tetrahydrofolate; sequence SLLP.

The protein belongs to the Fmt family.

The catalysed reaction is L-methionyl-tRNA(fMet) + (6R)-10-formyltetrahydrofolate = N-formyl-L-methionyl-tRNA(fMet) + (6S)-5,6,7,8-tetrahydrofolate + H(+). Its function is as follows. Attaches a formyl group to the free amino group of methionyl-tRNA(fMet). The formyl group appears to play a dual role in the initiator identity of N-formylmethionyl-tRNA by promoting its recognition by IF2 and preventing the misappropriation of this tRNA by the elongation apparatus. The polypeptide is Methionyl-tRNA formyltransferase (Parvibaculum lavamentivorans (strain DS-1 / DSM 13023 / NCIMB 13966)).